Here is a 245-residue protein sequence, read N- to C-terminus: 1-(5-phosphoribosyl)-5-[(5-phosphoribosylamino)methylideneamino] imidazole-4-carboxamide isomerase (245 aa).

The active-site Proton acceptor is the Asp-8. Asp-129 functions as the Proton donor in the catalytic mechanism.

This sequence belongs to the HisA/HisF family.

It is found in the cytoplasm. The enzyme catalyses 1-(5-phospho-beta-D-ribosyl)-5-[(5-phospho-beta-D-ribosylamino)methylideneamino]imidazole-4-carboxamide = 5-[(5-phospho-1-deoxy-D-ribulos-1-ylimino)methylamino]-1-(5-phospho-beta-D-ribosyl)imidazole-4-carboxamide. The protein operates within amino-acid biosynthesis; L-histidine biosynthesis; L-histidine from 5-phospho-alpha-D-ribose 1-diphosphate: step 4/9. The polypeptide is 1-(5-phosphoribosyl)-5-[(5-phosphoribosylamino)methylideneamino] imidazole-4-carboxamide isomerase (Geotalea daltonii (strain DSM 22248 / JCM 15807 / FRC-32) (Geobacter daltonii)).